The chain runs to 337 residues: NADH-quinone oxidoreductase subunit H (337 aa).

The next 9 membrane-spanning stretches (helical) occupy residues 9–29 (GIPL…LLLV), 50–70 (PNVV…KFVF), 82–102 (GIFL…WAVI), 115–135 (VGIL…IMAG), 161–181 (IGFV…TAIV), 186–206 (TIWY…SALA), 245–265 (SILL…LPPI), 273–293 (VPGV…FAMV), and 313–333 (FLPI…GFDI).

Belongs to the complex I subunit 1 family. In terms of assembly, NDH-1 is composed of 14 different subunits. Subunits NuoA, H, J, K, L, M, N constitute the membrane sector of the complex.

The protein resides in the cell inner membrane. It carries out the reaction a quinone + NADH + 5 H(+)(in) = a quinol + NAD(+) + 4 H(+)(out). Its function is as follows. NDH-1 shuttles electrons from NADH, via FMN and iron-sulfur (Fe-S) centers, to quinones in the respiratory chain. The immediate electron acceptor for the enzyme in this species is believed to be ubiquinone. Couples the redox reaction to proton translocation (for every two electrons transferred, four hydrogen ions are translocated across the cytoplasmic membrane), and thus conserves the redox energy in a proton gradient. This subunit may bind ubiquinone. This chain is NADH-quinone oxidoreductase subunit H, found in Parvibaculum lavamentivorans (strain DS-1 / DSM 13023 / NCIMB 13966).